The following is a 209-amino-acid chain: Large ribosomal subunit protein uL3 (209 aa).

Belongs to the universal ribosomal protein uL3 family. As to quaternary structure, part of the 50S ribosomal subunit. Forms a cluster with proteins L14 and L19.

Functionally, one of the primary rRNA binding proteins, it binds directly near the 3'-end of the 23S rRNA, where it nucleates assembly of the 50S subunit. This Nitratidesulfovibrio vulgaris (strain DSM 19637 / Miyazaki F) (Desulfovibrio vulgaris) protein is Large ribosomal subunit protein uL3.